We begin with the raw amino-acid sequence, 69 residues long: Putative membrane protein insertion efficiency factor (69 aa).

This sequence belongs to the UPF0161 family.

The protein localises to the cell membrane. Could be involved in insertion of integral membrane proteins into the membrane. This Clostridium kluyveri (strain NBRC 12016) protein is Putative membrane protein insertion efficiency factor.